Consider the following 66-residue polypeptide: Large ribosomal subunit protein bL31 (66 aa).

Cys16, Cys18, Cys36, and Cys39 together coordinate Zn(2+).

It belongs to the bacterial ribosomal protein bL31 family. Type A subfamily. In terms of assembly, part of the 50S ribosomal subunit. The cofactor is Zn(2+).

Functionally, binds the 23S rRNA. This Geobacillus sp. (strain WCH70) protein is Large ribosomal subunit protein bL31.